Consider the following 93-residue polypeptide: Small ribosomal subunit protein bS20c (93 aa).

Belongs to the bacterial ribosomal protein bS20 family.

Its subcellular location is the plastid. It is found in the chloroplast. In terms of biological role, binds directly to 16S ribosomal RNA. This chain is Small ribosomal subunit protein bS20c, found in Phaeodactylum tricornutum (strain CCAP 1055/1).